Here is a 688-residue protein sequence, read N- to C-terminus: PTS system glucoside-specific EIICBA component (688 aa).

In terms of domain architecture, PTS EIIC type-1 spans 3–427; that stretch reads KKLFGQLQRI…FKLKTPGRED (425 aa). The next 10 membrane-spanning stretches (helical) occupy residues 12 to 32, 81 to 101, 137 to 157, 182 to 202, 223 to 243, 284 to 304, 315 to 335, 340 to 360, 364 to 384, and 395 to 415; these read IGKA…LLAF, LGLA…YLIM, LVLG…MGAL, FVPI…SFAW, LTTF…LHHI, AFTT…AFAI, VVGG…ITEP, FLFV…TSFL, LLGV…ILYG, and LVIP…DFAI. Residues 438-519 form the PTS EIIB type-1 domain; sequence AKLPFDVLDA…AKIMSGEITK (82 aa). C460 serves as the catalytic Phosphocysteine intermediate; for EIIB activity. The PTS EIIA type-1 domain occupies 560–664; the sequence is DQVFAGKMMG…SIVTPMIITN (105 aa). Residue H612 is the Tele-phosphohistidine intermediate; for EIIA activity of the active site.

It is found in the cell membrane. Functionally, the phosphoenolpyruvate-dependent sugar phosphotransferase system (sugar PTS), a major carbohydrate active -transport system, catalyzes the phosphorylation of incoming sugar substrates concomitantly with their translocation across the cell membrane. This system is involved in alpha- and beta-glucoside transport. The protein is PTS system glucoside-specific EIICBA component (glcB) of Staphylococcus aureus (strain Mu3 / ATCC 700698).